The chain runs to 424 residues: 5-methylthioadenosine/S-adenosylhomocysteine deaminase (424 aa).

The Zn(2+) site is built by histidine 60 and histidine 62. Residues glutamate 89 and histidine 181 each contribute to the substrate site. Zn(2+) is bound at residue histidine 208. Residues glutamate 211 and aspartate 296 each contribute to the substrate site. Zn(2+) is bound at residue aspartate 296.

It belongs to the metallo-dependent hydrolases superfamily. MTA/SAH deaminase family. Zn(2+) is required as a cofactor.

It catalyses the reaction S-adenosyl-L-homocysteine + H2O + H(+) = S-inosyl-L-homocysteine + NH4(+). The catalysed reaction is S-methyl-5'-thioadenosine + H2O + H(+) = S-methyl-5'-thioinosine + NH4(+). Functionally, catalyzes the deamination of 5-methylthioadenosine and S-adenosyl-L-homocysteine into 5-methylthioinosine and S-inosyl-L-homocysteine, respectively. Is also able to deaminate adenosine. The chain is 5-methylthioadenosine/S-adenosylhomocysteine deaminase from Thermococcus kodakarensis (strain ATCC BAA-918 / JCM 12380 / KOD1) (Pyrococcus kodakaraensis (strain KOD1)).